Here is a 207-residue protein sequence, read N- to C-terminus: Ribosomal RNA small subunit methyltransferase G (207 aa).

Residues G75, M80, 126-127 (VE), and R141 each bind S-adenosyl-L-methionine.

The protein belongs to the methyltransferase superfamily. RNA methyltransferase RsmG family.

It localises to the cytoplasm. It carries out the reaction guanosine(527) in 16S rRNA + S-adenosyl-L-methionine = N(7)-methylguanosine(527) in 16S rRNA + S-adenosyl-L-homocysteine. Functionally, specifically methylates the N7 position of guanine in position 527 of 16S rRNA. The protein is Ribosomal RNA small subunit methyltransferase G of Laribacter hongkongensis (strain HLHK9).